A 120-amino-acid polypeptide reads, in one-letter code: Ubiquitin domain-containing protein TINCR (120 aa).

Residues Y14–V83 enclose the Ubiquitin-like domain.

Detected in stratum corneum (at protein level).

In Homo sapiens (Human), this protein is Ubiquitin domain-containing protein TINCR.